Here is a 338-residue protein sequence, read N- to C-terminus: Glutamate/glutamine/aspartate/asparagine-binding protein BztA (338 aa).

Residues Met1 to Ala22 form the signal peptide.

This sequence belongs to the bacterial solute-binding protein 3 family.

Its subcellular location is the periplasm. Part of a binding-protein-dependent transport system for glutamate, glutamine, aspartate and asparagine. The protein is Glutamate/glutamine/aspartate/asparagine-binding protein BztA (bztA) of Rhodobacter capsulatus (strain ATCC BAA-309 / NBRC 16581 / SB1003).